Consider the following 414-residue polypeptide: MHLFTVGVNHTTAPVSIRENVAFQNEHLSGALRDLNSHGIREAAILSTCNRTELYCNTDDPQKALEWLANYHRLKPQAIAPYMYTLPQENAVKHAFRVASGLDSMVLGEAQILGQMKQAVRIAENAGTLGTLLHKLFQRTFSVAKEVRTNTNIGANSVSLAAASTRLAQRIFGALNNQHVLFIGAGEMIELCAEHFAAHRPLSLTVANRTLERGQELAASIGGTSMLLADLPDRLAEFDIVITSTASQLPIVGLGMVERAIRARKHKPMFMVDLAVPRDIEPEAGELDDVFLYTVDDLAQIVQEGMENRQEAAAEAEAIIDMRVENFMQWLKTRSAVPTIRALREQAERHRLNELEKARKLLARGHDPAQVLDALSNALTNKLLHGPSHALNSATGEDREQLEATLRQLYQIHH.

Substrate contacts are provided by residues 48–51 (TCNR), Ser104, 109–111 (EAQ), and Gln115. Cys49 (nucleophile) is an active-site residue. Residue 184–189 (GAGEMI) participates in NADP(+) binding.

It belongs to the glutamyl-tRNA reductase family. Homodimer.

It carries out the reaction (S)-4-amino-5-oxopentanoate + tRNA(Glu) + NADP(+) = L-glutamyl-tRNA(Glu) + NADPH + H(+). It functions in the pathway porphyrin-containing compound metabolism; protoporphyrin-IX biosynthesis; 5-aminolevulinate from L-glutamyl-tRNA(Glu): step 1/2. Its function is as follows. Catalyzes the NADPH-dependent reduction of glutamyl-tRNA(Glu) to glutamate 1-semialdehyde (GSA). The chain is Glutamyl-tRNA reductase from Methylobacillus flagellatus (strain ATCC 51484 / DSM 6875 / VKM B-1610 / KT).